The sequence spans 562 residues: Membrane protein insertase YidC (562 aa).

The helical transmembrane segment at glutamine 4–glutamate 24 threads the bilayer. The interval threonine 33–aspartate 71 is disordered. Residues glutamate 35–aspartate 58 are compositionally biased toward acidic residues. Positions threonine 61–aspartate 71 are enriched in basic and acidic residues. 4 consecutive transmembrane segments (helical) span residues methionine 330–leucine 350, isoleucine 356–tyrosine 376, leucine 426–leucine 446, and isoleucine 499–valine 519.

The protein belongs to the OXA1/ALB3/YidC family. Type 1 subfamily. Interacts with the Sec translocase complex via SecD. Specifically interacts with transmembrane segments of nascent integral membrane proteins during membrane integration.

Its subcellular location is the cell inner membrane. In terms of biological role, required for the insertion and/or proper folding and/or complex formation of integral membrane proteins into the membrane. Involved in integration of membrane proteins that insert both dependently and independently of the Sec translocase complex, as well as at least some lipoproteins. Aids folding of multispanning membrane proteins. The sequence is that of Membrane protein insertase YidC from Alkalilimnicola ehrlichii (strain ATCC BAA-1101 / DSM 17681 / MLHE-1).